Consider the following 347-residue polypeptide: N-acetyl-gamma-glutamyl-phosphate reductase (347 aa).

Cys152 is a catalytic residue.

The protein belongs to the NAGSA dehydrogenase family. Type 1 subfamily.

The protein resides in the cytoplasm. The enzyme catalyses N-acetyl-L-glutamate 5-semialdehyde + phosphate + NADP(+) = N-acetyl-L-glutamyl 5-phosphate + NADPH + H(+). It functions in the pathway amino-acid biosynthesis; L-arginine biosynthesis; N(2)-acetyl-L-ornithine from L-glutamate: step 3/4. In terms of biological role, catalyzes the NADPH-dependent reduction of N-acetyl-5-glutamyl phosphate to yield N-acetyl-L-glutamate 5-semialdehyde. The chain is N-acetyl-gamma-glutamyl-phosphate reductase from Neisseria meningitidis serogroup A / serotype 4A (strain DSM 15465 / Z2491).